The primary structure comprises 245 residues: 1-(5-phosphoribosyl)-5-[(5-phosphoribosylamino)methylideneamino] imidazole-4-carboxamide isomerase (245 aa).

Aspartate 8 acts as the Proton acceptor in catalysis. Aspartate 129 acts as the Proton donor in catalysis.

Belongs to the HisA/HisF family.

The protein resides in the cytoplasm. It catalyses the reaction 1-(5-phospho-beta-D-ribosyl)-5-[(5-phospho-beta-D-ribosylamino)methylideneamino]imidazole-4-carboxamide = 5-[(5-phospho-1-deoxy-D-ribulos-1-ylimino)methylamino]-1-(5-phospho-beta-D-ribosyl)imidazole-4-carboxamide. Its pathway is amino-acid biosynthesis; L-histidine biosynthesis; L-histidine from 5-phospho-alpha-D-ribose 1-diphosphate: step 4/9. The protein is 1-(5-phosphoribosyl)-5-[(5-phosphoribosylamino)methylideneamino] imidazole-4-carboxamide isomerase of Rhodopseudomonas palustris (strain ATCC BAA-98 / CGA009).